The sequence spans 141 residues: Cholinesterase (141 aa).

The N-linked (GlcNAc...) asparagine glycan is linked to N39. 49 to 50 is a binding site for substrate; it reads GG. S131 acts as the Acyl-ester intermediate in catalysis. The residue at position 131 (S131) is a Phosphoserine.

The protein belongs to the type-B carboxylesterase/lipase family. In terms of assembly, homotetramer; disulfide-linked. Dimer of dimers. Present in most cells except erythrocytes.

The protein localises to the secreted. It carries out the reaction an acylcholine + H2O = a carboxylate + choline + H(+). In terms of biological role, esterase with broad substrate specificity. Contributes to the inactivation of the neurotransmitter acetylcholine. Can degrade neurotoxic organophosphate esters. The polypeptide is Cholinesterase (BCHE) (Sus scrofa (Pig)).